Consider the following 591-residue polypeptide: Paxillin (591 aa).

N-acetylmethionine is present on methionine 1. The LD motif 1 signature appears at 3–15; the sequence is DLDALLADLESTT. Positions 17–139 are disordered; sequence HISKRPVFLS…SPTVMSSSLG (123 aa). Phosphotyrosine; by PTK6 is present on tyrosine 31. Positions 45 to 54 are enriched in pro residues; that stretch reads VPPPVPPPPS. Serine 83 bears the Phosphoserine mark. Residue tyrosine 88 is modified to Phosphotyrosine. Over residues 89–99 the composition is skewed to low complexity; it reads SSSAKNSSASN. Serine 106 bears the Phosphoserine mark. Residue tyrosine 118 is modified to Phosphotyrosine; by PTK6. Phosphoserine is present on residues serine 119, serine 126, and serine 130. Positions 121–137 are enriched in polar residues; it reads PNKQKSAEPSPTVMSSS. At threonine 132 the chain carries Phosphothreonine. A phosphoserine mark is found at serine 137, serine 140, and serine 143. An LD motif 2 motif is present at residues 144–156; sequence ELDRLLLELNAVQ. Residues 156–261 form a disordered region; that stretch reads QHSPPGFPAD…QQQTRISASS (106 aa). Tyrosine 181 bears the Phosphotyrosine mark. The short motif at 216-228 is the LD motif 3 element; it reads SVESLLDELESSV. Serine 230 is modified (phosphoserine). The span at 236–261 shows a compositional bias: polar residues; sequence TVNQGEMSSPQRVTSSQQQTRISASS. Serine 244 is subject to Phosphoserine; by CDK5. 8 positions are modified to phosphoserine: serine 250, serine 258, serine 261, serine 272, serine 303, serine 322, serine 332, and serine 340. The interval 262 to 315 is required for binding to PARVA and ILK; it reads ATRELDELMASLSDFKMQGLEQRVDGERPWAAGWPPSSRQSSPEGQDEGGFMAQ. The LD motif 4 motif lies at 265-276; it reads ELDELMASLSDF. The segment at 289–338 is disordered; it reads RPWAAGWPPSSRQSSPEGQDEGGFMAQGKTGSSSPPGGLSKPGSQLDSML. Over residues 315 to 334 the composition is skewed to low complexity; sequence QGKTGSSSPPGGLSKPGSQL. An LD motif 5 motif is present at residues 333–345; sequence QLDSMLGSLQSDL. 4 LIM zinc-binding domains span residues 356–415, 416–473, 474–533, and 534–591; these read GVCG…LFSP, RCYY…DMFA, PKCG…RRGS, and LCSG…KLFC. At serine 533 the chain carries Phosphoserine.

Belongs to the paxillin family. In terms of assembly, interacts in vitro with VCL/vinculin as well as to the SH3 domain of SRC and, when tyrosine phosphorylated, to the SH2 domain of CRK. Interacts with GIT1. Interacts with NUDT16L1/SDOS. Interacts with PTK2/FAK1. Interacts with PTK2B/PYK2. Interacts with ASAP2. Interacts with unphosphorylated ITGA4. Interacts with RNF5. Interacts with PDCD10. Interacts with NEK3, the interaction is prolactin-dependent. Interacts with PTK6. Interacts with TGFB1I1. Interacts with SORBS1. Interacts with PARVB. Interacts (via LD motif 4) with PARVA/PARVIN. Interacts (via LD motif 4) with ILK. Interacts (via cytoplasmic domain) with CEACAM1; the interaction is phosphotyrosyl-dependent. Interacts with LIMA1; this complex stabilizes actin dynamics. Interacts with CD36 (via C-terminus). Interacts with TRIM15. Interacts with PAK4; PAK4 acts as a scaffold to suppport PAXI phosphorylation at Ser-272. Post-translationally, phosphorylated by MAPK1/ERK2. Phosphorylated on tyrosine residues during integrin-mediated cell adhesion, embryonic development, fibroblast transformation and following stimulation of cells by mitogens. Phosphorylation at Ser-244 by CDK5 reduces its interaction with PTK2/FAK1 in matrix-cell focal adhesions (MCFA) during oligodendrocytes (OLs) differentiation. Phosphorylation at Tyr-31 and Tyr-118 by PTK6 promote the activation of RAC1 via CRK/CrKII, thereby promoting migration and invasion. Phosphorylation at Ser-250 by SLK is required for PXN redistribution and cell motility. Phosphorylation at Ser-272 promotes focal adhesion disassembly during cell migration.

The protein localises to the cytoplasm. The protein resides in the cytoskeleton. Its subcellular location is the cell junction. It localises to the focal adhesion. It is found in the cell cortex. In terms of biological role, cytoskeletal protein involved in actin-membrane attachment at sites of cell adhesion to the extracellular matrix (focal adhesion). Recruits other proteins such as TRIM15 to focal adhesion. This Mus musculus (Mouse) protein is Paxillin.